A 392-amino-acid polypeptide reads, in one-letter code: ATP phosphoribosyltransferase regulatory subunit (392 aa).

Belongs to the class-II aminoacyl-tRNA synthetase family. HisZ subfamily. In terms of assembly, heteromultimer composed of HisG and HisZ subunits.

The protein localises to the cytoplasm. It functions in the pathway amino-acid biosynthesis; L-histidine biosynthesis; L-histidine from 5-phospho-alpha-D-ribose 1-diphosphate: step 1/9. Required for the first step of histidine biosynthesis. May allow the feedback regulation of ATP phosphoribosyltransferase activity by histidine. This is ATP phosphoribosyltransferase regulatory subunit from Prochlorococcus marinus (strain MIT 9211).